The following is a 203-amino-acid chain: Outer-membrane lipoprotein LolB (203 aa).

Positions 1–21 (MRLSASLFHIALVTVLLVLAG) are cleaved as a signal peptide. Residue cysteine 22 is the site of N-palmitoyl cysteine attachment. Cysteine 22 carries S-diacylglycerol cysteine lipidation.

The protein belongs to the LolB family. Monomer.

The protein localises to the cell outer membrane. Plays a critical role in the incorporation of lipoproteins in the outer membrane after they are released by the LolA protein. This chain is Outer-membrane lipoprotein LolB, found in Shewanella frigidimarina (strain NCIMB 400).